Consider the following 428-residue polypeptide: Flotillin-2 (428 aa).

S-palmitoyl cysteine attachment occurs at residues cysteine 4, cysteine 19, and cysteine 20.

The protein belongs to the band 7/mec-2 family. Flotillin subfamily. In terms of assembly, heterooligomeric complex of flotillins 1 and 2. Post-translationally, palmitoylation may be required for the formation of higher order complexes and for neurite outgrowth in cultured neural stem cells. Normally expressed in growing retinal exons of newly differentiated ganglion cells at the retinal margin. After optic nerve injury, expressed in all retinal ganglion cells and retinal axons. Also expressed in endothelial cells, spinal cord, larval and adult skin, muscle processes, thymus and gill macrophages.

The protein resides in the membrane. It localises to the endosome. Its function is as follows. May play a role in axon growth and regeneration. May be involved in epidermal cell adhesion and epidermal structure and function. This Carassius auratus (Goldfish) protein is Flotillin-2 (flot2).